A 123-amino-acid chain; its full sequence is Putative iron-sulfur cluster insertion protein ErpA (123 aa).

Iron-sulfur cluster-binding residues include C51, C115, and C117.

Belongs to the HesB/IscA family. In terms of assembly, homodimer. Iron-sulfur cluster serves as cofactor.

In terms of biological role, required for insertion of 4Fe-4S clusters. The sequence is that of Putative iron-sulfur cluster insertion protein ErpA from Burkholderia multivorans (strain ATCC 17616 / 249).